The following is a 374-amino-acid chain: Nucleosome assembly protein 1;1 (374 aa).

A coiled-coil region spans residues 26 to 80 (VNALKNKLQDITGKPTNVLECLSPNVRKRVEVLKEIQSQHDELEAKFYEERAVLE). The Nuclear export signal signature appears at 47 to 62 (LSPNVRKRVEVLKEIQ). Positions 223–228 (KKKPKK) match the Nuclear localization signal motif. Residues 299 to 339 (AAEDDFADLEDDDDDDEEDDDDEDEEEEDDEDDEDEEDEDD) are compositionally biased toward acidic residues. Residues 299 to 374 (AAEDDFADLE…GERPPECKQQ (76 aa)) are disordered. Positions 343 to 355 (KKKSSAVRKRGVR) are enriched in basic residues. Cysteine 371 carries the cysteine methyl ester modification. A lipid anchor (S-farnesyl cysteine) is attached at cysteine 371. A propeptide spans 372 to 374 (KQQ) (removed in mature form).

It belongs to the nucleosome assembly protein (NAP) family. In terms of assembly, binds preferentially histones H4 and H1 in vitro. Interacts with CYCB1;1.

It is found in the nucleus. The protein resides in the cytoplasm. Functionally, may modulate chromatin structure by regulation of nucleosome assembly/disassembly. Could function together with B-type cyclins in the regulation of microtubule dynamics. The sequence is that of Nucleosome assembly protein 1;1 (NAP1;1) from Nicotiana tabacum (Common tobacco).